The sequence spans 201 residues: Membrane protein UL120 (201 aa).

Positions 1 to 25 (MYRAGVTLLVVAVVSFGRWDSVTVA) are cleaved as a signal peptide. Over 26–170 (TTIRVGWWYE…AYFRRSDHRA (145 aa)) the chain is Extracellular. Residues N47, N50, N56, N85, N96, N114, N123, and N138 are each glycosylated (N-linked (GlcNAc...) asparagine; by host). The chain crosses the membrane as a helical span at residues 171–191 (FMIVILTQVVFVVFIINASFI). Over 192-201 (WSWTFRRHKR) the chain is Cytoplasmic.

Belongs to the HHV-5 UL120 protein family.

The protein localises to the host membrane. This is Membrane protein UL120 (UL120) from Human cytomegalovirus (strain Merlin) (HHV-5).